The primary structure comprises 1310 residues: Adhesion G protein-coupled receptor A3 (1310 aa).

Residues M1–A27 form the signal peptide. Residues L28–N70 form the LRRNT domain. Residues L28–L747 lie on the Extracellular side of the membrane. N-linked (GlcNAc...) asparagine glycosylation is found at N70 and N87. 4 LRR repeats span residues R71–G92, L95–G116, S119–G140, and N143–Y164. N-linked (GlcNAc...) asparagine glycosylation is found at N148, N195, N290, N321, N422, N442, N581, N641, N676, and N717. An LRRCT domain is found at E176 to P226. Residues P231–V329 enclose the Ig-like domain. C253 and C313 are joined by a disulfide. The GAIN-B domain occupies L572 to E739. The interval A690 to E739 is GPS. C709 and C723 are oxidised to a cystine. Residues L748–I768 traverse the membrane as a helical segment. At S769 to H785 the chain is on the cytoplasmic side. Residues M786–T806 form a helical membrane-spanning segment. Residues Q807 to Q815 are Extracellular-facing. N-linked (GlcNAc...) asparagine glycosylation occurs at N810. A helical membrane pass occupies residues A816–A836. The Cytoplasmic portion of the chain corresponds to R837–R865. The chain crosses the membrane as a helical span at residues F866–I886. The Extracellular portion of the chain corresponds to K887–A908. The chain crosses the membrane as a helical span at residues F909–I929. At Q930 to L985 the chain is on the cytoplasmic side. A helical transmembrane segment spans residues L986 to V1006. Residues S1007–D1013 are Extracellular-facing. The helical transmembrane segment at L1014–H1034 threads the bilayer. Over H1035–V1310 the chain is Cytoplasmic. 3 disordered regions span residues P1065 to E1084, V1187 to R1208, and Y1221 to E1264. Polar residues predominate over residues N1222–S1239. Positions T1308–V1310 match the PDZ-binding motif.

Belongs to the G-protein coupled receptor 2 family. Adhesion G-protein coupled receptor (ADGR) subfamily. As to quaternary structure, interacts (via PDZ-binding motif) with DLG1. As to expression, expressed by spermatogonial progenitor cells located within the outer cell layer of the seminiferous tubule and by multipotent adult spermatogonial-derived stem cells.

The protein resides in the membrane. Orphan receptor that may have a role in planar cell polarity pathway. In Mus musculus (Mouse), this protein is Adhesion G protein-coupled receptor A3 (Adgra3).